A 142-amino-acid polypeptide reads, in one-letter code: Galactose-6-phosphate isomerase subunit LacA (142 aa).

It belongs to the LacAB/RpiB family. As to quaternary structure, heteromultimeric protein consisting of LacA and LacB.

The catalysed reaction is aldehydo-D-galactose 6-phosphate = keto-D-tagatose 6-phosphate. It functions in the pathway carbohydrate metabolism; D-galactose 6-phosphate degradation; D-tagatose 6-phosphate from D-galactose 6-phosphate: step 1/1. The protein is Galactose-6-phosphate isomerase subunit LacA of Enterococcus faecalis (strain ATCC 700802 / V583).